We begin with the raw amino-acid sequence, 586 residues long: Ezrin (586 aa).

Residues 2 to 295 form the FERM domain; that stretch reads PKPINVRVTT…GNHELYMRRR (294 aa). An N6-acetyllysine modification is found at K60. The [IL]-x-C-x-x-[DE] motif motif lies at 115–120; sequence IYCPPE. A Phosphotyrosine; by PDGFR modification is found at Y146. The segment at 244–586 is interaction with SCYL3; that stretch reads EIRNISFNDK…KQRIDEFEAM (343 aa). A coiled-coil region spans residues 302-462; it reads VQQMKAQARE…QDDLVKTKEE (161 aa). Residues 306 to 338 form a disordered region; that stretch reads KAQAREEKHQKQLERQQLETEKKRRETVEREKE. Over residues 308–338 the composition is skewed to basic and acidic residues; it reads QAREEKHQKQLERQQLETEKKRRETVEREKE. The residue at position 366 (S366) is a Phosphoserine. Residue Y478 is modified to Phosphotyrosine. A Phosphoserine modification is found at S535. The residue at position 567 (T567) is a Phosphothreonine; by ROCK2 and PKC/PRKCI.

Interacts with PODXL and NHERF2. Found in a complex with EZR, PODXL and NHERF2. Interacts with PALS1. Interacts with MCC, PLEKHG6, SCYL3/PACE1, NHERF1 and TMEM8B. Interacts (when phosphorylated) with FES/FPS. Interacts with dimeric S100P, the interaction may be activating through unmasking of F-actin binding sites. Identified in complexes that contain VIM, EZR, AHNAK, BFSP1, BFSP2, ANK2, PLEC, PRX and spectrin. Detected in a complex composed of at least EZR, AHNAK, PPL and PRX. Interacts with PDPN (via cytoplasmic domain); activates RHOA and promotes epithelial-mesenchymal transition. Interacts with SPN/CD43 cytoplasmic tail, CD44 and ICAM2. Interacts with SLC9A3; interaction targets SLC9A3 to the apical membrane. Interacts with SLC9A1; regulates interactions of SLC9A1 with cytoskeletal and promotes stress fiber formation. Interacts with CLIC5; may work together in a complex which also includes RDX and MYO6 to stabilize linkages between the plasma membrane and subjacent actin cytoskeleton at the base of stereocilia. Phosphorylated by tyrosine-protein kinases. Phosphorylation by ROCK2 suppresses the head-to-tail association of the N-terminal and C-terminal halves resulting in an opened conformation which is capable of actin and membrane-binding. In terms of processing, S-nitrosylation is induced by interferon-gamma and oxidatively-modified low-densitity lipoprotein (LDL(ox)) possibly implicating the iNOS-S100A8/9 transnitrosylase complex. Glomerular epithelium cell (podocyte). Expressed in cerebrum, cerebellum and hippocampus (at protein level). Expressed in the small intestine, lung, kidney and ovaries.

The protein resides in the apical cell membrane. It is found in the cell projection. It localises to the microvillus membrane. Its subcellular location is the ruffle membrane. The protein localises to the cytoplasm. The protein resides in the cell cortex. It is found in the cytoskeleton. It localises to the microvillus. Its activity is regulated as follows. A head-to-tail association, of the N-terminal and C-terminal halves results in a closed conformation (inactive form) which is incapable of actin or membrane-binding. Functionally, probably involved in connections of major cytoskeletal structures to the plasma membrane. In epithelial cells, required for the formation of microvilli and membrane ruffles on the apical pole. Along with PLEKHG6, required for normal macropinocytosis. The sequence is that of Ezrin (Ezr) from Rattus norvegicus (Rat).